The sequence spans 917 residues: Major intrinsically disordered Notch2-binding receptor 1 (917 aa).

The Cytoplasmic portion of the chain corresponds to 1-892 (MEANQEASLF…AEFRRAKVCK (892 aa)). Disordered regions lie at residues 337 to 367 (STYF…WPAK), 389 to 410 (SEEK…GPDR), 457 to 476 (DKSI…SVGT), 568 to 588 (ITNG…NVHH), 652 to 679 (SEAP…LENS), 706 to 727 (TRPS…IASI), and 746 to 783 (NEEE…LPKQ). Residues 460–476 (ISCTSGQHSSDTSSVGT) are compositionally biased toward polar residues. Positions 576 to 588 (KGDKCNRPENVHH) are enriched in basic and acidic residues. Serine 712 is subject to Phosphoserine. The helical transmembrane segment at 893 to 913 (IAALITAAACTVILVIVVPIC) threads the bilayer. Residues 914 to 917 (TMKS) are Extracellular-facing.

Belongs to the MINAR family. In terms of assembly, interacts with NOTCH2; this interaction increases MINAR1 stability. Interacts (via N-terminus) with DEPTOR (via PDZ domain); this interaction may stabilize DEPTOR protein by impairing its ubiquitination.

The protein resides in the cell membrane. Functionally, intrinsically disordered protein which may negatively regulate mTOR signaling pathway by stabilizing the mTOR complex component DEPTOR. Negatively regulates angiogenesis. Negatively regulates cell growth. Negatively regulates neurite outgrowth in hippocampal neurons. This is Major intrinsically disordered Notch2-binding receptor 1 (Minar1) from Rattus norvegicus (Rat).